The following is a 612-amino-acid chain: Cyclin-dependent kinase G1 (612 aa).

Residues 26 to 54 (SRDVYVRQSGRDDERRQIKRPSDHDLRRN) are compositionally biased toward basic and acidic residues. Disordered stretches follow at residues 26-60 (SRDV…RHRS) and 239-278 (CYSS…EDQD). One can recognise a Protein kinase domain in the interval 297–593 (FQKLNKINEG…VEDALNHGWF (297 aa)). ATP is bound by residues 303 to 311 (INEGTYGIV) and K326. The residue at position 308 (Y308) is a Phosphotyrosine. The active-site Proton acceptor is D426. Residue S453 is modified to Phosphoserine. Phosphothreonine is present on T459.

This sequence belongs to the protein kinase superfamily. Ser/Thr protein kinase family. As to quaternary structure, forms a complex with CYCL1-1. Associated with the spliceosome. Interacts with RS2Z33. As to expression, expressed in leaves and inflorescences. Lower levels of expression in roots and stems.

The protein localises to the nucleus speckle. It carries out the reaction L-seryl-[protein] + ATP = O-phospho-L-seryl-[protein] + ADP + H(+). The catalysed reaction is L-threonyl-[protein] + ATP = O-phospho-L-threonyl-[protein] + ADP + H(+). Its function is as follows. Cyclin-dependent kinase involved in pre-mRNA splicing. Required for the correct splicing of the sixth intron of CALS5 pre-mRNA. May stabilize the binding of U1 snRNP to this rare type of intron with a GC 5'SS. Involved in chromosome pairing and is required for the completion of synapsis in male meiocytes at high ambient temperatures. This chain is Cyclin-dependent kinase G1 (CDKG1), found in Arabidopsis thaliana (Mouse-ear cress).